A 119-amino-acid polypeptide reads, in one-letter code: Large ribosomal subunit protein uL18 (119 aa).

This sequence belongs to the universal ribosomal protein uL18 family. Part of the 50S ribosomal subunit; part of the 5S rRNA/L5/L18/L25 subcomplex. Contacts the 5S and 23S rRNAs.

Functionally, this is one of the proteins that bind and probably mediate the attachment of the 5S RNA into the large ribosomal subunit, where it forms part of the central protuberance. This Mesorhizobium japonicum (strain LMG 29417 / CECT 9101 / MAFF 303099) (Mesorhizobium loti (strain MAFF 303099)) protein is Large ribosomal subunit protein uL18.